The sequence spans 565 residues: NAD-dependent malic enzyme (565 aa).

Y104 serves as the catalytic Proton donor. Residue R157 participates in NAD(+) binding. K175 (proton acceptor) is an active-site residue. The a divalent metal cation site is built by E246, D247, and D270. NAD(+) contacts are provided by D270 and N418.

Belongs to the malic enzymes family. As to quaternary structure, homotetramer. The cofactor is Mg(2+). It depends on Mn(2+) as a cofactor.

It catalyses the reaction (S)-malate + NAD(+) = pyruvate + CO2 + NADH. The enzyme catalyses oxaloacetate + H(+) = pyruvate + CO2. In Escherichia coli O9:H4 (strain HS), this protein is NAD-dependent malic enzyme.